The primary structure comprises 273 residues: Undecaprenyl-diphosphatase (273 aa).

Transmembrane regions (helical) follow at residues 7 to 27, 45 to 65, 89 to 109, 115 to 135, 152 to 171, 189 to 209, 221 to 241, and 253 to 273; these read LWIA…PVSS, AETF…VMFW, LTLI…LLLH, LFNP…LIAA, TYRQ…WPGF, YAAS…ATGL, ADFP…LIAI, and FIPF…LFVL.

It belongs to the UppP family.

The protein localises to the cell inner membrane. It catalyses the reaction di-trans,octa-cis-undecaprenyl diphosphate + H2O = di-trans,octa-cis-undecaprenyl phosphate + phosphate + H(+). In terms of biological role, catalyzes the dephosphorylation of undecaprenyl diphosphate (UPP). Confers resistance to bacitracin. This is Undecaprenyl-diphosphatase from Erwinia tasmaniensis (strain DSM 17950 / CFBP 7177 / CIP 109463 / NCPPB 4357 / Et1/99).